A 104-amino-acid chain; its full sequence is Large ribosomal subunit protein bL21 (104 aa).

The segment covering 78 to 91 (KRRRQNSRRKRGHR) has biased composition (basic residues). The segment at 78–104 (KRRRQNSRRKRGHRQDHTVVRITGISA) is disordered.

The protein belongs to the bacterial ribosomal protein bL21 family. In terms of assembly, part of the 50S ribosomal subunit. Contacts protein L20.

Its function is as follows. This protein binds to 23S rRNA in the presence of protein L20. The chain is Large ribosomal subunit protein bL21 from Methylobacterium radiotolerans (strain ATCC 27329 / DSM 1819 / JCM 2831 / NBRC 15690 / NCIMB 10815 / 0-1).